Here is a 72-residue protein sequence, read N- to C-terminus: MAKEDSIEMEGTVVDTLPNTMFRVELENGHVITAHISGKMRKHYIRILTGDKVTVQLTPYDLSKGRIVYRAR.

The S1-like domain occupies 1-72; sequence MAKEDSIEME…SKGRIVYRAR (72 aa).

Belongs to the IF-1 family. In terms of assembly, component of the 30S ribosomal translation pre-initiation complex which assembles on the 30S ribosome in the order IF-2 and IF-3, IF-1 and N-formylmethionyl-tRNA(fMet); mRNA recruitment can occur at any time during PIC assembly.

It is found in the cytoplasm. One of the essential components for the initiation of protein synthesis. Stabilizes the binding of IF-2 and IF-3 on the 30S subunit to which N-formylmethionyl-tRNA(fMet) subsequently binds. Helps modulate mRNA selection, yielding the 30S pre-initiation complex (PIC). Upon addition of the 50S ribosomal subunit IF-1, IF-2 and IF-3 are released leaving the mature 70S translation initiation complex. The protein is Translation initiation factor IF-1 of Nitrosococcus oceani (strain ATCC 19707 / BCRC 17464 / JCM 30415 / NCIMB 11848 / C-107).